Reading from the N-terminus, the 303-residue chain is Exosome complex component RRP4 homolog (303 aa).

The region spanning 175 to 213 (GILIKVPPHLIKKSKKHFHTLPYGMAVIIGCNGSVWVTP) is the KH domain.

The protein belongs to the RRP4 family. In terms of assembly, component of the RNA exosome complex. Ubiquitously expressed.

It localises to the nucleus. The protein resides in the nucleolus. Its subcellular location is the nucleoplasm. Non-catalytic component of the RNA exosome complex which has 3'-&gt;5' exoribonuclease activity and participates in a multitude of cellular RNA processing and degradation events. Involved in regulation of antisense ribosomal siRNA production. Involved in response to cold-warm shock. This chain is Exosome complex component RRP4 homolog, found in Caenorhabditis elegans.